The primary structure comprises 480 residues: RNA-binding protein 42 (480 aa).

Residues 1–30 (MAGAGPAPGLPGAGGPVVPGPGAGIPGKSG) form a disordered region. N-acetylalanine is present on A2. Over residues 11–27 (PGAGGPVVPGPGAGIPG) the composition is skewed to gly residues. Phosphoserine is present on S135. R153, R158, R168, and R181 each carry asymmetric dimethylarginine. The interval 236 to 480 (ELGLGLGLGL…QKEKKKLGLR (245 aa)) is necessary for interaction with HNRNPK. The tract at residues 319–356 (SLRPRPRPPRPEPPPGLMALEVPEPLGEDKKKGKPEKL) is disordered. The span at 345 to 356 (GEDKKKGKPEKL) shows a compositional bias: basic and acidic residues. The 79-residue stretch at 381–459 (FRIFCGDLGN…RPIKLRKSMW (79 aa)) folds into the RRM domain.

The protein belongs to the RRM RBM42 family. Interacts with HNRNPK.

Its subcellular location is the nucleus. It localises to the cytoplasm. Functionally, binds (via the RRM domain) to the 3'-untranslated region (UTR) of CDKN1A mRNA. The sequence is that of RNA-binding protein 42 (RBM42) from Homo sapiens (Human).